The sequence spans 495 residues: Endolysin LysK (495 aa).

The Peptidase C51 domain maps to Ala-29 to Glu-160. Ca(2+)-binding residues include Asp-45, Asp-47, Tyr-49, and His-51. Cys-54 functions as the For endopeptidase activity in the catalytic mechanism. Asp-56 contributes to the Ca(2+) binding site. Catalysis depends on for endopeptidase activity residues His-117 and Glu-134. An N-acetylmuramoyl-L-alanine amidase domain is found at Gly-205 to His-334. The Zn(2+) site is built by His-214, His-324, and Cys-332. The span at Ser-378–Ala-393 shows a compositional bias: polar residues. Positions Ser-378–Thr-398 are disordered. In terms of domain architecture, SH3b spans Pro-412–Val-481.

This sequence belongs to the N-acetylmuramoyl-L-alanine amidase 2 family. The cofactor is Zn(2+).

The enzyme catalyses Hydrolyzes the link between N-acetylmuramoyl residues and L-amino acid residues in certain cell-wall glycopeptides.. Functionally, endolysin that degrades host peptidoglycans and participates in the sequential events which lead to the programmed host cell lysis releasing the mature viral particles. Exhibits lytic activity against Staphylococcus aureus. The CHAP activity cleaves the peptidic bond between the D-alanine of the tetra-peptide stem and the first glycine of the penta-glycine cross-bridge. The N-acetyl-muramidase activity cleaves between N-acetylmuramic acid and N-acetylglucosamine bonds. In Staphylococcus aureus, this protein is Endolysin LysK.